The sequence spans 447 residues: Phosphoglucosamine mutase (447 aa).

The active-site Phosphoserine intermediate is Ser-104. Mg(2+) is bound by residues Ser-104, Asp-243, Asp-245, and Asp-247. A Phosphoserine modification is found at Ser-104.

The protein belongs to the phosphohexose mutase family. Requires Mg(2+) as cofactor. Activated by phosphorylation.

It catalyses the reaction alpha-D-glucosamine 1-phosphate = D-glucosamine 6-phosphate. In terms of biological role, catalyzes the conversion of glucosamine-6-phosphate to glucosamine-1-phosphate. The chain is Phosphoglucosamine mutase from Corynebacterium jeikeium (strain K411).